A 137-amino-acid chain; its full sequence is Transcription antitermination protein NusB (137 aa).

This sequence belongs to the NusB family.

In terms of biological role, involved in transcription antitermination. Required for transcription of ribosomal RNA (rRNA) genes. Binds specifically to the boxA antiterminator sequence of the ribosomal RNA (rrn) operons. This Aeromonas hydrophila subsp. hydrophila (strain ATCC 7966 / DSM 30187 / BCRC 13018 / CCUG 14551 / JCM 1027 / KCTC 2358 / NCIMB 9240 / NCTC 8049) protein is Transcription antitermination protein NusB.